The primary structure comprises 499 residues: Aspartyl/glutamyl-tRNA(Asn/Gln) amidotransferase subunit B (499 aa).

The protein belongs to the GatB/GatE family. GatB subfamily. Heterotrimer of A, B and C subunits.

The catalysed reaction is L-glutamyl-tRNA(Gln) + L-glutamine + ATP + H2O = L-glutaminyl-tRNA(Gln) + L-glutamate + ADP + phosphate + H(+). It catalyses the reaction L-aspartyl-tRNA(Asn) + L-glutamine + ATP + H2O = L-asparaginyl-tRNA(Asn) + L-glutamate + ADP + phosphate + 2 H(+). Its function is as follows. Allows the formation of correctly charged Asn-tRNA(Asn) or Gln-tRNA(Gln) through the transamidation of misacylated Asp-tRNA(Asn) or Glu-tRNA(Gln) in organisms which lack either or both of asparaginyl-tRNA or glutaminyl-tRNA synthetases. The reaction takes place in the presence of glutamine and ATP through an activated phospho-Asp-tRNA(Asn) or phospho-Glu-tRNA(Gln). This chain is Aspartyl/glutamyl-tRNA(Asn/Gln) amidotransferase subunit B, found in Salinispora tropica (strain ATCC BAA-916 / DSM 44818 / JCM 13857 / NBRC 105044 / CNB-440).